The following is a 542-amino-acid chain: GMP synthase [glutamine-hydrolyzing] (542 aa).

The 191-residue stretch at 28–218 (MLVILDFGSQ…VYHICQCEPT (191 aa)) folds into the Glutamine amidotransferase type-1 domain. C105 functions as the Nucleophile in the catalytic mechanism. Residues H192 and E194 contribute to the active site. A GMPS ATP-PPase domain is found at 219–417 (WTTEAFVEES…IGLPEEIVRR (199 aa)). 246 to 252 (SGGVDSS) lines the ATP pocket.

Homodimer.

The enzyme catalyses XMP + L-glutamine + ATP + H2O = GMP + L-glutamate + AMP + diphosphate + 2 H(+). It functions in the pathway purine metabolism; GMP biosynthesis; GMP from XMP (L-Gln route): step 1/1. In terms of biological role, catalyzes the synthesis of GMP from XMP. This chain is GMP synthase [glutamine-hydrolyzing], found in Rippkaea orientalis (strain PCC 8801 / RF-1) (Cyanothece sp. (strain PCC 8801)).